Reading from the N-terminus, the 666-residue chain is DNA mismatch repair protein MutL (666 aa).

Belongs to the DNA mismatch repair MutL/HexB family.

Functionally, this protein is involved in the repair of mismatches in DNA. It is required for dam-dependent methyl-directed DNA mismatch repair. May act as a 'molecular matchmaker', a protein that promotes the formation of a stable complex between two or more DNA-binding proteins in an ATP-dependent manner without itself being part of a final effector complex. The polypeptide is DNA mismatch repair protein MutL (Clostridium botulinum (strain 657 / Type Ba4)).